Here is a 598-residue protein sequence, read N- to C-terminus: DNA (cytosine-5)-methyltransferase DRM2 (598 aa).

2 disordered regions span residues Met1–Ala49 and Glu114–Asp146. In terms of domain architecture, UBA 1 spans Pro42–Tyr91. Over residues Glu114–Asp128 the composition is skewed to acidic residues. Residues Glu150–Ser194 enclose the UBA 2 domain. Residues Gly227–Pro252 form a disordered region. Residues Val272–Val598 form the SAM-dependent MTase DRM-type domain.

Belongs to the class I-like SAM-binding methyltransferase superfamily. DRM-methyltransferase family. In terms of assembly, interacts (via UBA domains) with EIF4A.

The protein localises to the nucleus. It catalyses the reaction a 2'-deoxycytidine in DNA + S-adenosyl-L-methionine = a 5-methyl-2'-deoxycytidine in DNA + S-adenosyl-L-homocysteine + H(+). In terms of biological role, involved in de novo DNA methylation. Required for CpG and non-CpG methylation. Required for normal establishment and maintenance of RNA-directed DNA methylation (RdDM) mediated by small interfering RNAs (siRNAs). Regulates proper plant development in both vegetative and reproductive stages through DNA methylation. The protein is DNA (cytosine-5)-methyltransferase DRM2 of Oryza sativa subsp. japonica (Rice).